Here is a 350-residue protein sequence, read N- to C-terminus: ALA-interacting subunit 5 (350 aa).

A disordered region spans residues M1–K23. S2 bears the N-acetylserine mark. The helical transmembrane segment at V50–F70 threads the bilayer. N-linked (GlcNAc...) asparagine glycosylation is found at N181 and N231. Residues F304–A324 form a helical membrane-spanning segment.

This sequence belongs to the CDC50/LEM3 family. Interacts with ALA2 and ALA3 in a heterologous system. Expressed in roots, leaves, stems, flowers and siliques.

It is found in the golgi apparatus membrane. It localises to the prevacuolar compartment membrane. The protein localises to the endoplasmic reticulum membrane. Functionally, required for the lipid transport activity of the ALA/ALIS P4-ATPase complex. The chain is ALA-interacting subunit 5 (ALIS5) from Arabidopsis thaliana (Mouse-ear cress).